We begin with the raw amino-acid sequence, 1651 residues long: Alsin (1651 aa).

RCC1 repeat units lie at residues 59-108, 109-167, and 169-218; these read DGEV…AVTE, SGVV…ALSI, and REIW…ALVQ. Residues 444 to 476 form a disordered region; sequence REEQVKQESLQGKKSSSLMDIREEESEGGSRRL. Over residues 450 to 461 the composition is skewed to polar residues; that stretch reads QESLQGKKSSSL. Phosphoserine is present on residues serine 459, serine 460, serine 477, and serine 486. Residue threonine 504 is modified to Phosphothreonine. 2 RCC1 repeats span residues 519-570 and 572-621; these read RTEV…ALTA and SQVY…FLVD. Lysine 527 bears the N6-acetyllysine mark. The region spanning 684 to 879 is the DH domain; it reads GYIASLHELA…ESLALHLGKK (196 aa). In terms of domain architecture, PH spans 895-1001; it reads GKMTDSLRKP…RAISQAVDQA (107 aa). 8 MORN repeats span residues 1043–1065, 1066–1088, 1094–1116, 1117–1139, 1145–1167, 1169–1191, 1192–1214, and 1215–1238; these read YDGR…DGKV, YSGT…NKAL, YVGH…SGEV, FEGC…KLTS, FIGQ…TRGE, YMGM…FGLY, YEGN…DDTI, and YEGE…NGDY. Residue serine 1329 is modified to Phosphoserine. The VPS9 domain maps to 1507–1651; the sequence is KQPDIALLGF…YYQIQREKLN (145 aa).

As to quaternary structure, forms a heteromeric complex with ALS2CL. Interacts with ALS2CL.

May act as a GTPase regulator. Controls survival and growth of spinal motoneurons. The polypeptide is Alsin (Als2) (Rattus norvegicus (Rat)).